The chain runs to 1305 residues: Contactin-associated protein like 5-3 (1305 aa).

The signal sequence occupies residues 1 to 24; that stretch reads MDSVPRLNSVFTLVLSGLWHFGLT. The region spanning 25 to 174 is the F5/8 type C domain; sequence ATNYNCDDPL…IGMRVEVYGC (150 aa). The Extracellular segment spans residues 25–1235; the sequence is ATNYNCDDPL…EPLTNAVPSD (1211 aa). Laminin G-like domains lie at 180 to 360 and 367 to 544; these read VADF…TFSC and PITF…IDLC. Asparagine 282 is a glycosylation site (N-linked (GlcNAc...) asparagine). Cysteine 329 and cysteine 360 are joined by a disulfide. Asparagine 496 carries N-linked (GlcNAc...) asparagine glycosylation. Cystine bridges form between cysteine 512–cysteine 544, cysteine 550–cysteine 561, and cysteine 555–cysteine 570. Residues 546–583 enclose the EGF-like 1 domain; sequence IKDRCLPNYCEHGGQCAQTWTNFYCNCSDTGYTGATCH. Asparagine 571 carries an N-linked (GlcNAc...) asparagine glycan. An intrachain disulfide couples cysteine 572 to cysteine 582. The region spanning 584–790 is the Fibrinogen C-terminal domain; sequence DSIYEQSCEV…LRCYGDRHFW (207 aa). A Laminin G-like 3 domain is found at 791–956; sequence NAVSFSTEAS…KVTSGVRPGC (166 aa). 4 disulfide bridges follow: cysteine 929/cysteine 956, cysteine 960/cysteine 973, cysteine 967/cysteine 982, and cysteine 984/cysteine 994. An EGF-like 2 domain is found at 957-995; it reads PGHCSSYGRNCQNGGKCVEKHIGYSCDCTNSPYEGPFCQ. The Laminin G-like 4 domain occupies 1013 to 1198; the sequence is QEPYSVTKNT…VQRTLTESSC (186 aa). 2 N-linked (GlcNAc...) asparagine glycosylation sites follow: asparagine 1023 and asparagine 1057. Cysteine 1163 and cysteine 1198 are joined by a disulfide. A helical transmembrane segment spans residues 1236–1256; it reads LAVIGGIIAVVTFISFSVIGI. Topologically, residues 1257-1305 are cytoplasmic; the sequence is MTHFFYQHKRSHYASQMKEKEYPENVDSSSRNDIDLQNTTRECKQEDFI.

The protein belongs to the neurexin family. Expressed in brain.

It is found in the membrane. Its function is as follows. May play a role in the correct development and proper functioning of the peripheral and central nervous system and be involved in cell adhesion and intercellular communication. This chain is Contactin-associated protein like 5-3 (Cntnap5c), found in Mus musculus (Mouse).